We begin with the raw amino-acid sequence, 310 residues long: Carbamate kinase 1 (310 aa).

Belongs to the carbamate kinase family.

It is found in the cytoplasm. The enzyme catalyses hydrogencarbonate + NH4(+) + ATP = carbamoyl phosphate + ADP + H2O + H(+). The protein operates within metabolic intermediate metabolism; carbamoyl phosphate degradation; CO(2) and NH(3) from carbamoyl phosphate: step 1/1. This chain is Carbamate kinase 1 (arcC1), found in Staphylococcus aureus (strain bovine RF122 / ET3-1).